We begin with the raw amino-acid sequence, 936 residues long: F-box protein dre-1 (936 aa).

Residues 1–67 form a disordered region; the sequence is MSSSSSPFFH…GSSEADNPTL (67 aa). Residues 22–36 are compositionally biased toward low complexity; sequence QQSPSYSQNSNSPSQ. Residues 48–63 show a composition bias toward polar residues; it reads GSTSMRYSPSGSSEAD. The F-box domain occupies 159-205; it reads QDHINRLPEELLLKVFSFLPDKSLLACSSVSYRFNQISNSHEVWKEL. PbH1 repeat units follow at residues 405-427, 428-450, 451-473, 474-496, 497-519, 520-542, 543-565, 566-588, 589-611, 612-634, 635-657, 658-680, 681-703, 704-726, 727-749, 750-772, 773-795, and 796-818; these read SAAPKFKYCTVLDCENVGIYITD, NATGHYEHCEIARNTLAGVWVKN, HANPYFRKCTIHSGKDVGVFTFE, HGQGYFEKCNIHSNRISGIEVKN, SANPVVIRCEVHHGYTGGIYVHE, RGRGQFMENRIYANAYAGIWITS, HSDPTIRKNEIFTGQQGGVYIFG, EGRGLIEQNNIYGNALAGIQIRS, QSDPIVRLNKIHDGLHGGIYVHE, KGRGLIEENEVYGNTLAGIWVTT, GSSPILRKNRIHSGKQVGVYFYD, QGHGLLEENDIFNHLYSGVQIRT, GSNPKITRNKIWGGQNGGVLVYN, GGKGCLEDNEIFDNAMAGVWIKT, DSEPTLRRNKIYDGRDGGVCIFN, RGKGLLEDNEIFRNAQAGVLIST, ESNPTLRRNRVFDGKSAGIEITN, and GATATLEENQLFRNKYGGLCVAT. The UBR-type zinc-finger motif lies at 843–914; sequence GLCLFKVSSN…LERHCHLQNV (72 aa).

As to quaternary structure, component of a SCF ubiquitin ligase complex. Interacts (via F-box) with skr-1. Interacts with blmp-1; the interaction targets blmp-1 for proteasomal degradation. Interacts with ced-9; the interaction inhibits ced-9 activity, either directly or indirectly. In terms of tissue distribution, in mid-embryogenesis, expression is most prominent in epidermal and intestinal cells. By the 1.5-fold stage of embryogenesis, expression is additionally detected in neurons and other cells. During larval and adult stages, highest expression is seen in epidermal seam cells and hypodermis. In larvae, strongly expressed in the P epidermal blast cells and descendents that give rise to the vulva and weakly expressed in the somatic gonad, including the gonadoblasts, the anchor cell and the distal tip cells. Some weak expression also seen in adult spermatheca and uterus. In the musculature, expressed in the pharynx, anal depressor, sex muscles, and body wall muscles. Detected in neurons of the head, tail, ventral cord and periphery. Also expressed in the embryonic tail spike cell.

The protein resides in the nucleus. The protein localises to the cytoplasm. It functions in the pathway protein modification; protein ubiquitination. Its function is as follows. Substrate recognition component of a SCF (SKP1-CUL1-F-box protein) E3 ubiquitin-protein ligase complex which mediates the ubiquitination and subsequent proteasomal degradation of target proteins including blmp-1. Promotes ubiquitination of snail family proteins ces-1, scrt-1 and snai-1. Heterochronic protein which is required for the timing of gonad development and epidermal seam cell differentiation. Regulates tail-spike cell death through inhibition of the apoptosis regulator ced-9. This is F-box protein dre-1 from Caenorhabditis elegans.